A 118-amino-acid polypeptide reads, in one-letter code: ATP synthase subunit g, mitochondrial (118 aa).

This sequence belongs to the ATPase g subunit family. As to quaternary structure, F-type ATPases have 2 components, CF(1) - the catalytic core - and CF(0) - the membrane proton channel.

The protein localises to the mitochondrion membrane. Mitochondrial membrane ATP synthase (F(1)F(0) ATP synthase or Complex V) produces ATP from ADP in the presence of a proton gradient across the membrane which is generated by electron transport complexes of the respiratory chain. F-type ATPases consist of two structural domains, F(1) - containing the extramembraneous catalytic core, and F(0) - containing the membrane proton channel, linked together by a central stalk and a peripheral stalk. During catalysis, ATP synthesis in the catalytic domain of F(1) is coupled via a rotary mechanism of the central stalk subunits to proton translocation. Part of the complex F(0) domain. Minor subunit located with subunit a in the membrane. The sequence is that of ATP synthase subunit g, mitochondrial (atp20) from Schizosaccharomyces pombe (strain 972 / ATCC 24843) (Fission yeast).